Consider the following 98-residue polypeptide: MNLYDVIKKPVITEGSMAQYEAGKYVFEVDTRAHKLLIKQAVEAAFEGVKVANVNTINVKPKAKRVGRYTGFTNKTKKAIVTLTADSKAIELFGAEEE.

This sequence belongs to the universal ribosomal protein uL23 family. As to quaternary structure, part of the 50S ribosomal subunit. Contacts protein L29, and trigger factor when it is bound to the ribosome.

In terms of biological role, one of the early assembly proteins it binds 23S rRNA. One of the proteins that surrounds the polypeptide exit tunnel on the outside of the ribosome. Forms the main docking site for trigger factor binding to the ribosome. In Streptococcus sanguinis (strain SK36), this protein is Large ribosomal subunit protein uL23.